The sequence spans 205 residues: Thymidine kinase (205 aa).

Residues 9 to 16 (SAMNAGKT) and 88 to 91 (DECH) contribute to the ATP site. Residue E89 is the Proton acceptor of the active site. C146, C148, C183, and H186 together coordinate Zn(2+).

The protein belongs to the thymidine kinase family. As to quaternary structure, homotetramer.

It localises to the cytoplasm. The catalysed reaction is thymidine + ATP = dTMP + ADP + H(+). This is Thymidine kinase from Blochmanniella pennsylvanica (strain BPEN).